Consider the following 253-residue polypeptide: Triosephosphate isomerase, cytosolic (253 aa).

Substrate-binding residues include Asn10 and Lys12. Residue His96 is the Electrophile of the active site. Catalysis depends on Glu166, which acts as the Proton acceptor.

Belongs to the triosephosphate isomerase family. Homodimer.

Its subcellular location is the cytoplasm. It carries out the reaction D-glyceraldehyde 3-phosphate = dihydroxyacetone phosphate. Its pathway is carbohydrate biosynthesis; gluconeogenesis. It participates in carbohydrate degradation; glycolysis; D-glyceraldehyde 3-phosphate from glycerone phosphate: step 1/1. This chain is Triosephosphate isomerase, cytosolic, found in Secale cereale (Rye).